Consider the following 126-residue polypeptide: MYYPLLSIALGSVLGAWLRWFLGLKLNPIYPQIPLGTVTVNLVGGFIIGFAMAYFAHSDLSPNYKLFVITGFCGALTTFSTFSIEIVTLLQSGKWGMAMLAISIHLIGSLIFTCLGLAAYYWVAGH.

Transmembrane regions (helical) follow at residues 4 to 24 (PLLS…FLGL), 33 to 53 (IPLG…FAMA), 67 to 87 (FVIT…IEIV), and 97 to 117 (MAML…CLGL). Glycine 74 and threonine 77 together coordinate Na(+).

The protein belongs to the fluoride channel Fluc/FEX (TC 1.A.43) family.

It localises to the cell inner membrane. The catalysed reaction is fluoride(in) = fluoride(out). Its activity is regulated as follows. Na(+) is not transported, but it plays an essential structural role and its presence is essential for fluoride channel function. Its function is as follows. Fluoride-specific ion channel. Important for reducing fluoride concentration in the cell, thus reducing its toxicity. The protein is Fluoride-specific ion channel FluC of Acinetobacter baumannii (strain ATCC 17978 / DSM 105126 / CIP 53.77 / LMG 1025 / NCDC KC755 / 5377).